The following is a 374-amino-acid chain: Peptide chain release factor 2 (374 aa).

N5-methylglutamine is present on Q254.

The protein belongs to the prokaryotic/mitochondrial release factor family. Methylated by PrmC. Methylation increases the termination efficiency of RF2.

Its subcellular location is the cytoplasm. In terms of biological role, peptide chain release factor 2 directs the termination of translation in response to the peptide chain termination codons UGA and UAA. This is Peptide chain release factor 2 from Renibacterium salmoninarum (strain ATCC 33209 / DSM 20767 / JCM 11484 / NBRC 15589 / NCIMB 2235).